A 429-amino-acid polypeptide reads, in one-letter code: Protein ABERRANT PANICLE ORGANIZATION 1 (429 aa).

Over residues 1-11 the composition is skewed to pro residues; the sequence is MMNPRRLPPLP. The disordered stretch occupies residues 1–21; the sequence is MMNPRRLPPLPSSTSSASAAD. One can recognise an F-box domain in the interval 25-71; the sequence is PRVWRRLPQPLVDRILACLPTPSFLRLRAACRRFYHLLFSSPFLHSH. The next 2 helical transmembrane spans lie at 72-92 and 112-132; these read LLLSPHLPFFAFVVPAAGHLL and VAGGPAAFSPAAASAGLLAFL. Kelch repeat units lie at residues 229-277, 284-339, and 350-397; these read MAFA…ELGG, RVAL…AEGG, and YVVL…GAAG.

As to quaternary structure, part of a putative SCF (ASK/Cullin/F-box) ubiquitin ligase complex. Interacts with FL/APO2. Expressed in apical meristems and the lateral organ primordia throughout development. Expressed in seedlings, roots, leaves, shoot apical meristem (SAM), developing panicles, and, at lower levels, in developing seeds.

The protein resides in the membrane. It participates in protein modification; protein ubiquitination. Its function is as follows. Component of SCF(ASK-cullin-F-box) E3 ubiquitin ligase complexes, which may mediate the ubiquitination and subsequent proteasomal degradation of target proteins. Together with FL/APO2, involved in the temporal regulation of meristem identity during both vegetative and reproductive developments in an APO2-dependent manner. Promotes spikelet formation by suppressing the precocious conversion of inflorescence meristems to spikelet meristems, probably via a positive regulation of class-C floral homeotic genes, but not of class-B genes, and through the control of cell proliferation in meristems. Mediates culm development and strength/diameter enhancement at internodes. Required for the regulation of the plastochron, floral organ identity, and floral determinacy. Controls the number of primary rachis branches (PRBs). May trigger the formation of vascular bundle systems which, consequently, promote carbohydrate translocation to panicles. Involved in ozone-induced grain yield regulation. The sequence is that of Protein ABERRANT PANICLE ORGANIZATION 1 from Oryza sativa subsp. japonica (Rice).